The primary structure comprises 437 residues: Aromatic peroxidase fscJ (437 aa).

An N-terminal signal peptide occupies residues 1 to 19; sequence MKWLHLLSVVACVADEVYA. Residue C83 participates in heme binding.

The protein belongs to the chloroperoxidase family. It depends on heme b as a cofactor.

Its pathway is secondary metabolite biosynthesis. Functionally, aromatic peroxidase; part of the fragmented gene cluster that mediates the biosynthesis of fusarochromene, a tryptophan-derived metabolite closely related to a group of mycotoxins including fusarochromanone. The role of fscJ within the pathway has not been identified yet. The first step of the pathway is the epimerization of L-tryptophan to D-tryptophan in the presence of the NRPS-like tryptophan epimerase fscC. D-tryptophan is subsequently hydroxylated by the tryptophan 6-hydroxylase fscE to yield 6-hydroxytryptophan. The pyrrole ring undergoes cleavaged by the tryptophan 2,3-dioxygenase fscD and is finally converted to 4-hydroxykyrunenine by the hydrolase fscH. The NRPS-like oxidoreductase fscA reduces the carboxyl group to primary alcohol and the DMATS-type prenyltransferase fscG performs prenylation, followed by the formation of a chromene ring catalyzed by the oxidoreductase fscI, which leads to desacetylfusarochromene. Epoxidation by fscF and rearrangement reactions of chromene double bonds convert compound desacetylfusarochromene to fusarochromanones. Although specific acetyltransferases were not found near the fsc gene cluster, several predicted enzymes containing the N-acetyltransferase superfamily domain are present in the genome of F.equiseti. These predicted enzymes may have the potential to convert desacetylfusarochromene to fusarochromene. The sequence is that of Aromatic peroxidase fscJ from Fusarium equiseti (Fusarium scirpi).